A 283-amino-acid polypeptide reads, in one-letter code: Release factor glutamine methyltransferase (283 aa).

Residues D143 and N189 each contribute to the S-adenosyl-L-methionine site. 189–192 (NPPY) provides a ligand contact to substrate.

Belongs to the protein N5-glutamine methyltransferase family. PrmC subfamily.

It catalyses the reaction L-glutaminyl-[peptide chain release factor] + S-adenosyl-L-methionine = N(5)-methyl-L-glutaminyl-[peptide chain release factor] + S-adenosyl-L-homocysteine + H(+). Its function is as follows. Methylates the class 1 translation termination release factors RF1/PrfA and RF2/PrfB on the glutamine residue of the universally conserved GGQ motif. The chain is Release factor glutamine methyltransferase from Clostridium botulinum (strain Hall / ATCC 3502 / NCTC 13319 / Type A).